The primary structure comprises 411 residues: Peptidyl-prolyl cis-trans isomerase (411 aa).

Ser2 bears the N-acetylserine mark. Disordered stretches follow at residues 54-127 (IIKR…TLSP) and 160-302 (NYVK…PKSK). Residues 61–87 (FEDDDFLGGDFDEDEIDEESSEEEEEE) are compositionally biased toward acidic residues. Residues Ser80 and Ser81 each carry the phosphoserine modification. A Phosphothreonine modification is found at Thr89. 2 stretches are compositionally biased toward acidic residues: residues 103-118 (ESED…DEFQ) and 173-242 (EGED…EEQK). Tyr184 carries the phosphotyrosine; by CK2 modification. Residue Ser186 is modified to Phosphoserine; by CK2. Basic residues predominate over residues 251–260 (KSKKEKKRKH). The Nuclear localization signal motif lies at 256 to 271 (KKRKHEEKEEEKKAKK). Residues 261-296 (EEKEEEKKAKKVKKVEFKKDLEEGPTKPKSKKEQDK) are compositionally biased toward basic and acidic residues. In terms of domain architecture, PPIase FKBP-type spans 324 to 411 (GARVGMRYIG…FDVKLVSMKN (88 aa)).

It belongs to the FKBP-type PPIase family. FKBP3/4 subfamily. In terms of assembly, interacts with NOP53. In terms of processing, phosphorylated at tyrosine and dephosphorylated by the phosphotyrosine-specific phosphoprotein phosphatase PTP1.

It localises to the nucleus. The protein resides in the nucleolus. It catalyses the reaction [protein]-peptidylproline (omega=180) = [protein]-peptidylproline (omega=0). Its activity is regulated as follows. Inhibited by both FK506 and rapamycin. Its function is as follows. Proline isomerase that belongs to an abundant class of enzymes that catalyze the cis-trans isomerization of X-Pro peptide bonds and can accelerate the refolding of proline-containing polypeptides. Specifically binds nuclear localization sequences. May be involved in the assembly or folding of ribosomal proteins. In Saccharomyces cerevisiae (strain ATCC 204508 / S288c) (Baker's yeast), this protein is Peptidyl-prolyl cis-trans isomerase.